The following is a 252-amino-acid chain: Outer kinetochore KNL1 complex subunit ZWINT (252 aa).

Residues 80–99 (QSPDALASEDASRQKATETK) form a disordered region. Residues 89–99 (DASRQKATETK) are compositionally biased toward basic and acidic residues. A coiled-coil region spans residues 120–221 (LSEALPQVKE…QRNQSYLQLL (102 aa)). Ser216 and Ser249 each carry phosphoserine.

As to quaternary structure, component of the KNL1 complex composed of KNL1 and ZWINT. Part of the ten-subunit outer kinetochore KMN network that includes the KNL1, MIS12 and NDC80 complexes; a bioriented kinetochore contains approximately 150 copies of the network. Interacts with the MIS12 complex subunits MIS12 DSN1, and PMF1. Interacts with the NDC80 complex subunit NDC80 during mitosis. Interacts with ZW10. Interacts with CETN3.

It is found in the nucleus. The protein localises to the chromosome. Its subcellular location is the centromere. It localises to the kinetochore. In terms of biological role, acts as a component of the outer kinetochore KNL1 complex that serves as a docking point for spindle assembly checkpoint components and mediates microtubule-kinetochore interactions. Kinetochores, consisting of a centromere-associated inner segment and a microtubule-contacting outer segment, play a crucial role in chromosome segregation by mediating the physical connection between centromeric DNA and spindle microtubules. The outer kinetochore is made up of the ten-subunit KMN network, comprising the MIS12, NDC80 and KNL1 complexes, and auxiliary microtubule-associated components; together they connect the outer kinetochore with the inner kinetochore, bind microtubules, and mediate interactions with mitotic checkpoint proteins that delay anaphase until chromosomes are bioriented on the spindle. Targets the RZZ complex to the kinetochore at prometaphase. Recruits MAD2L1 to the kinetochore, but is not required for BUB1B localization. In addition to orienting mitotic chromosomes, it is also essential for alignment of homologous chromosomes during meiotic metaphase I. In meiosis I, required to activate the spindle assembly checkpoint at unattached kinetochores to correct erroneous kinetochore-microtubule attachments. In Mus musculus (Mouse), this protein is Outer kinetochore KNL1 complex subunit ZWINT (Zwint).